A 248-amino-acid chain; its full sequence is Peptidyl-prolyl cis-trans isomerase, chloroplastic (248 aa).

Positions 85-243 constitute a PPIase cyclophilin-type domain; sequence FFDIEIGGES…KPCKIAKSGE (159 aa). Residues 223–248 form a disordered region; the sequence is QETSKLDNSPKKPCKIAKSGELPLDG.

This sequence belongs to the cyclophilin-type PPIase family. Highly expressed in leaf.

It is found in the plastid. The protein localises to the chloroplast stroma. The catalysed reaction is [protein]-peptidylproline (omega=180) = [protein]-peptidylproline (omega=0). Binds cyclosporin A (CsA). CsA mediates some of its effects via an inhibitory action on PPIase. PPIases accelerate the folding of proteins. It catalyzes the cis-trans isomerization of proline imidic peptide bonds in oligopeptides. The chain is Peptidyl-prolyl cis-trans isomerase, chloroplastic from Vicia faba (Broad bean).